The primary structure comprises 438 residues: Transposon Ty2-OR2 Gag polyprotein (438 aa).

Disordered regions lie at residues 1 to 88 (MESQ…YQQH), 365 to 397 (NVSRTSPNTTNTKVTTRNYHRTNSSKPRAAKAH), and 419 to 438 (SSQYLSDDNELSLRPATERI). Polar residues-rich tracts occupy residues 19 to 39 (ASVTSKEVPSNQDPLAVSASN) and 49 to 60 (KVNSQEETTPGT). The RNA-binding stretch occupies residues 295–397 (ENNINVSDRL…SSKPRAAKAH (103 aa)). Low complexity predominate over residues 369–381 (TSPNTTNTKVTTR).

As to quaternary structure, homotrimer.

The protein localises to the cytoplasm. Functionally, capsid protein (CA) is the structural component of the virus-like particle (VLP), forming the shell that encapsulates the retrotransposons dimeric RNA genome. The particles are assembled from trimer-clustered units and there are holes in the capsid shells that allow for the diffusion of macromolecules. CA also has nucleocapsid-like chaperone activity, promoting primer tRNA(i)-Met annealing to the multipartite primer-binding site (PBS), dimerization of Ty2 RNA and initiation of reverse transcription. The protein is Transposon Ty2-OR2 Gag polyprotein (TY2A-OR2) of Saccharomyces cerevisiae (strain ATCC 204508 / S288c) (Baker's yeast).